The chain runs to 199 residues: MSEEHHYKVHSRVLRWMKSAERIKRELDEGYEKKWRGKSVEEIKEQKKVHDIVEILELLKSKECDRFFFRTGKYMKGGSERWKMVANGILEEGGEKKVGKVEVGLFKGERGGSVVYHLMFRPTETERAGMVGGSSFGKGDDVDEIKKEESSDMSGFRYPPGVRCEMTSNGNEFRIEYRNPKNTSEVLRTLTILRIPEIR.

This sequence belongs to the UPF0329 family.

This chain is UPF0329 protein ECU01_0120/ECU01_1490/ECU08_0050, found in Encephalitozoon cuniculi (strain GB-M1) (Microsporidian parasite).